A 257-amino-acid chain; its full sequence is UPF0246 protein SO_3540 (257 aa).

It belongs to the UPF0246 family.

The polypeptide is UPF0246 protein SO_3540 (Shewanella oneidensis (strain ATCC 700550 / JCM 31522 / CIP 106686 / LMG 19005 / NCIMB 14063 / MR-1)).